A 476-amino-acid chain; its full sequence is CBL-interacting protein kinase 30 (476 aa).

One can recognise a Protein kinase domain in the interval 17–272; it reads YKLGRLLGRG…ISKIMDRPWF (256 aa). ATP contacts are provided by residues 23-31 and Lys-46; that span reads LGRGTFAKV. Asp-140 functions as the Proton acceptor in the catalytic mechanism. The segment at 158–187 is activation loop; sequence DFGLSALDGGLRGDGLLHTTCGTPAYVAPE. The tract at residues 296 to 315 is disordered; it reads KEASQQHDDEEDDGFAREKK. The 55-residue stretch at 299–353 folds into the NAF domain; it reads SQQHDDEEDDGFAREKKKRSNVIMSSPVIDVRPSSMNAFDIISRSRGLDLSKMFD. Positions 358–387 are PPI; the sequence is RSEARFSTRETTTAIVSKLEEIAEAGRFSF.

Belongs to the protein kinase superfamily. CAMK Ser/Thr protein kinase family. SNF1 subfamily. It depends on Mn(2+) as a cofactor.

It catalyses the reaction L-seryl-[protein] + ATP = O-phospho-L-seryl-[protein] + ADP + H(+). It carries out the reaction L-threonyl-[protein] + ATP = O-phospho-L-threonyl-[protein] + ADP + H(+). CIPK serine-threonine protein kinases interact with CBL proteins. Binding of a CBL protein to the regulatory NAF domain of CIPK protein lead to the activation of the kinase in a calcium-dependent manner. The sequence is that of CBL-interacting protein kinase 30 (CIPK30) from Oryza sativa subsp. japonica (Rice).